We begin with the raw amino-acid sequence, 356 residues long: Arginine kinase (356 aa).

Alanine 2 carries the N-acetylalanine modification. The Phosphagen kinase N-terminal domain maps to 9 to 91 (KLEAGFKKLE…FDPIIEDYHV (83 aa)). An L-arginine-binding site is contributed by 64 to 68 (GVGIY). One can recognise a Phosphagen kinase C-terminal domain in the interval 119 to 356 (YVISTRVRCG…LELIKMEKEM (238 aa)). ATP is bound by residues 122-126 (STRVR) and histidine 185. L-arginine is bound at residue glutamate 225. Arginine 229 contributes to the ATP binding site. An L-arginine-binding site is contributed by cysteine 271. Residues 280-284 (RASVH) and 309-314 (RGTRGE) contribute to the ATP site. Glutamate 314 contributes to the L-arginine binding site.

This sequence belongs to the ATP:guanido phosphotransferase family.

It catalyses the reaction L-arginine + ATP = N(omega)-phospho-L-arginine + ADP + H(+). The polypeptide is Arginine kinase (Penaeus monodon (Giant tiger prawn)).